The chain runs to 309 residues: Gamma-hemolysin component A (309 aa).

Positions 1–29 (MIKNKILTATLAVGLIAPLANPFIEISKA) are cleaved as a signal peptide.

This sequence belongs to the aerolysin family. Toxicity requires sequential binding and synergistic association of a class S and a class F component which form heterooligomeric complexes. HlgA (class S) associates with HlgB (class F) thus forming an AB toxin in strains producing both gamma-hemolysins and leukocidins. HlgA and LukF-PV can also form a complex.

The protein resides in the secreted. Functionally, toxin that seems to act by forming pores in the membrane of the cell. Has a hemolytic and a leucotoxic activity. This is Gamma-hemolysin component A (hlgA) from Staphylococcus aureus (strain MRSA252).